The primary structure comprises 127 residues: MORF4 family-associated protein 1-like 1 (127 aa).

A coiled-coil region spans residues 87 to 118; the sequence is GEADERVSELCEKAEEKAKEIAKMAEMLVELV.

This sequence belongs to the MORF4 family-associated protein family.

The polypeptide is MORF4 family-associated protein 1-like 1 (MRFAP1L1) (Homo sapiens (Human)).